A 116-amino-acid polypeptide reads, in one-letter code: Cuticle protein AM1274 (116 aa).

At glutamine 1 the chain carries Pyrrolidone carboxylic acid. Residues 1 to 22 (QLANEPPIEIIRQESTDNGDGN) form a disordered region. The Chitin-binding type R&amp;R domain maps to 20-85 (DGNFNFLFET…PVSDFIPTPH (66 aa)). O-linked (HexNAc) threonine glycosylation is present at threonine 83.

Arthrodial membrane.

The protein is Cuticle protein AM1274 of Cancer pagurus (Rock crab).